The primary structure comprises 267 residues: Deoxyribose-phosphate aldolase (267 aa).

The Proton donor/acceptor role is filled by D123. K185 serves as the catalytic Schiff-base intermediate with acetaldehyde. K217 serves as the catalytic Proton donor/acceptor.

This sequence belongs to the DeoC/FbaB aldolase family. DeoC type 1 subfamily.

The protein resides in the cytoplasm. The enzyme catalyses 2-deoxy-D-ribose 5-phosphate = D-glyceraldehyde 3-phosphate + acetaldehyde. It participates in carbohydrate degradation; 2-deoxy-D-ribose 1-phosphate degradation; D-glyceraldehyde 3-phosphate and acetaldehyde from 2-deoxy-alpha-D-ribose 1-phosphate: step 2/2. In terms of biological role, catalyzes a reversible aldol reaction between acetaldehyde and D-glyceraldehyde 3-phosphate to generate 2-deoxy-D-ribose 5-phosphate. The protein is Deoxyribose-phosphate aldolase of Coccidioides immitis (strain RS) (Valley fever fungus).